The sequence spans 345 residues: NADPH dehydrogenase (345 aa).

23 to 26 (SPMC) is an FMN binding site. Tyrosine 28 contacts substrate. Residues alanine 60 and glutamine 102 each contribute to the FMN site. 164–167 (HGAH) is a binding site for substrate. Residues arginine 215 and 307–308 (GR) each bind FMN.

Belongs to the NADH:flavin oxidoreductase/NADH oxidase family. NamA subfamily. As to quaternary structure, homotetramer. FMN is required as a cofactor.

It carries out the reaction A + NADPH + H(+) = AH2 + NADP(+). Catalyzes the reduction of the double bond of an array of alpha,beta-unsaturated aldehydes and ketones. It also reduces the nitro group of nitroester and nitroaromatic compounds. It could have a role in detoxification processes. In Bacillus cereus (strain AH187), this protein is NADPH dehydrogenase.